The chain runs to 540 residues: Phosphoenolpyruvate carboxykinase (ATP) (540 aa).

Substrate is bound at residue arginine 65. Position 87 is an N6-acetyllysine (lysine 87). Residues tyrosine 207 and lysine 213 each coordinate substrate. Residues lysine 213, histidine 232, and 248-256 (GLSGTGKTT) contribute to the ATP site. Lysine 213 and histidine 232 together coordinate Mn(2+). Aspartate 269 contributes to the Mn(2+) binding site. ATP-binding positions include glutamate 297, arginine 333, 449–450 (RI), and threonine 455. Arginine 333 contributes to the substrate binding site. Position 523 is an N6-acetyllysine (lysine 523).

The protein belongs to the phosphoenolpyruvate carboxykinase (ATP) family. As to quaternary structure, monomer. Requires Mn(2+) as cofactor.

It localises to the cytoplasm. It catalyses the reaction oxaloacetate + ATP = phosphoenolpyruvate + ADP + CO2. The protein operates within carbohydrate biosynthesis; gluconeogenesis. Functionally, involved in the gluconeogenesis. Catalyzes the conversion of oxaloacetate (OAA) to phosphoenolpyruvate (PEP) through direct phosphoryl transfer between the nucleoside triphosphate and OAA. The chain is Phosphoenolpyruvate carboxykinase (ATP) from Escherichia coli O6:K15:H31 (strain 536 / UPEC).